A 402-amino-acid chain; its full sequence is Hyaluronan and proteoglycan link protein 4 (402 aa).

A signal peptide spans 1–29 (MVCARAALGPGALWAAAWGVLLLTAPAGA). The Ig-like C2-type domain maps to 46 to 161 (SVVVQTAPGQ…DAGMVKLDLE (116 aa)). Intrachain disulfides connect Cys68-Cys143, Cys185-Cys266, Cys209-Cys230, Cys293-Cys363, and Cys318-Cys339. An N-linked (GlcNAc...) asparagine glycan is attached at Asn132. Link domains lie at 163 to 268 (VVFP…FCFT) and 273 to 365 (GRVF…YCYR).

This sequence belongs to the HAPLN family. In terms of tissue distribution, expressed predominantly in brain.

The protein localises to the secreted. It is found in the extracellular space. Its subcellular location is the extracellular matrix. Functionally, essential for the proper localization of brevican (BCAN), mainly as a perineuronal nets (PNNs)-type deposition in the brainstem and cerebellum thereby playing a key role in the formation and structural organization of PNNs. Contributes to the formation and transmission of inhibitory GABAergic synapses between Purkinje cells and deep cerebellar nuclei neurons. The polypeptide is Hyaluronan and proteoglycan link protein 4 (HAPLN4) (Homo sapiens (Human)).